The following is a 226-amino-acid chain: ATP synthase subunit a 1 (226 aa).

5 helical membrane passes run 20–40 (LTIVTTWAVMLLLAGGSWLIT), 78–98 (YLPFIATLFLFIATANLCTVI), 113–133 (ALALSVFIAVPLFGIAESGLV), 174–194 (MILVILLTISPLVFPVLMNIL), and 196–216 (LLTGMVQAYIFSILATVYIAA).

The protein belongs to the ATPase A chain family. F-type ATPases have 2 components, CF(1) - the catalytic core - and CF(0) - the membrane proton channel. CF(1) has five subunits: alpha(3), beta(3), gamma(1), delta(1), epsilon(1). CF(0) has four main subunits: a, b, b' and c.

The protein resides in the cell inner membrane. Key component of the proton channel; it plays a direct role in the translocation of protons across the membrane. This chain is ATP synthase subunit a 1, found in Chlorobaculum parvum (strain DSM 263 / NCIMB 8327) (Chlorobium vibrioforme subsp. thiosulfatophilum).